The chain runs to 407 residues: Elongation factor Tu (407 aa).

The 208-residue stretch at 10 to 217 folds into the tr-type G domain; it reads KPHVNVGTIG…TLDTYIPDPE (208 aa). Residues 19 to 26 are G1; the sequence is GHVDHGKT. A GTP-binding site is contributed by 19 to 26; the sequence is GHVDHGKT. Thr26 is a binding site for Mg(2+). Residues 60–64 form a G2 region; that stretch reads GITIS. A G3 region spans residues 81 to 84; it reads DCPG. Residues 81-85 and 136-139 contribute to the GTP site; these read DCPGH and NKSD. Residues 136–139 are G4; it reads NKSD. The G5 stretch occupies residues 184–186; that stretch reads SAL.

The protein belongs to the TRAFAC class translation factor GTPase superfamily. Classic translation factor GTPase family. EF-Tu/EF-1A subfamily. In terms of assembly, monomer.

The protein localises to the cytoplasm. The enzyme catalyses GTP + H2O = GDP + phosphate + H(+). In terms of biological role, GTP hydrolase that promotes the GTP-dependent binding of aminoacyl-tRNA to the A-site of ribosomes during protein biosynthesis. The sequence is that of Elongation factor Tu from Marinomonas sp. (strain MWYL1).